The primary structure comprises 624 residues: (-)-beta-phellandrene synthase 2, chloroplastic (624 aa).

Residues 1–48 (MAIVSSVPLASKSCLHKSLISSIHKLKPFCRTIPTLGMSRPGKYVMPS) constitute a chloroplast transit peptide. The Mg(2+) site is built by Asp375, Asp379, and Asp527. Residues 375-379 (DDMYD) carry the DDXXD motif motif.

It belongs to the terpene synthase family. Tpsd subfamily. It depends on Mg(2+) as a cofactor. Mn(2+) is required as a cofactor.

It localises to the plastid. The protein localises to the chloroplast. The enzyme catalyses (2E)-geranyl diphosphate = (-)-beta-phellandrene + diphosphate. The protein operates within terpene metabolism; oleoresin biosynthesis. Functionally, terpene synthase (TPS) involved in the biosynthesis of monoterpene natural products included in conifer oleoresin secretions and volatile emissions; these compounds contribute to biotic and abiotic stress defense against herbivores and pathogens. Catalyzes the conversion of (2E)-geranyl diphosphate (GPP) to (-)-beta-phellandrene. The polypeptide is (-)-beta-phellandrene synthase 2, chloroplastic (Picea sitchensis (Sitka spruce)).